Consider the following 538-residue polypeptide: RNA-binding protein RO60 (538 aa).

An N-acetylmethionine modification is found at Met1. Phosphoserine is present on residues Ser4 and Ser19. One can recognise a TROVE domain in the interval 16–369; that stretch reads IANSQDGYVW…TFKTVEPTGK (354 aa). The RNA-binding stretch occupies residues 120 to 284; the sequence is RIPTHLFTFI…EMPLTALLRN (165 aa). An N6-acetyllysine mark is found at Lys224 and Lys359. Positions 361-538 are VWFA-like domain; that stretch reads FKTVEPTGKR…VIRNFTLDMI (178 aa). 3 residues coordinate a divalent metal cation: Ser378, Ser380, and Thr445.

This sequence belongs to the Ro 60 kDa family. Identified in a IGF2BP1-dependent mRNP granule complex containing untranslated mRNAs. Found in a complex with PUF60 and Y5 RNA. Interacts with RAB11FIP5.

The protein localises to the cytoplasm. In terms of biological role, RNA-binding protein that binds to misfolded non-coding RNAs, pre-5S rRNA, and several small cytoplasmic RNA molecules known as Y RNAs. Binds to endogenous Alu retroelements which are induced by type I interferon and stimulate porinflammatory cytokine secretion. Regulates the expression of Alu retroelements as well as inflammatory genes. May play roles in cilia formation and/or maintenance. The polypeptide is RNA-binding protein RO60 (Homo sapiens (Human)).